The sequence spans 457 residues: Toxin and drug export protein A (457 aa).

The N-terminal stretch at 1–23 (MFTIKKLTLTIVVATTLTGCANI) is a signal peptide.

This sequence belongs to the outer membrane factor (OMF) (TC 1.B.17) family. In terms of assembly, homotrimer. Probably part of a complex composed of LtxB, LtxD and TdeA, which forms a single transport channel across the two membranes.

It localises to the cell outer membrane. Functionally, required for secretion of the LtxA leukotoxin and resistance to various antimicrobial compounds. The polypeptide is Toxin and drug export protein A (Aggregatibacter actinomycetemcomitans (Actinobacillus actinomycetemcomitans)).